We begin with the raw amino-acid sequence, 506 residues long: Serine/threonine-protein kinase RIO1 (506 aa).

Residues 22–52 are disordered; sequence TASSSSDDEPEQAVVKQEKLEAGEQIEEQYD. The Protein kinase domain occupies 142–506; that stretch reads LNIDGCISTG…KKRAHRQHMK (365 aa). ATP contacts are provided by residues 148 to 156, lysine 169, and leucine 241; that span reads ISTGKEANV. The active-site Proton acceptor is the aspartate 285. Asparagine 290 lines the ATP pocket. Asparagine 290 and aspartate 302 together coordinate Mg(2+). Aspartate 302 functions as the 4-aspartylphosphate intermediate in the catalytic mechanism. Residues 418–506 form a disordered region; it reads GDGFGEEHDD…KKRAHRQHMK (89 aa). The span at 424–435 shows a compositional bias: acidic residues; the sequence is EHDDSDDNDDEE. The span at 454-490 shows a compositional bias: basic and acidic residues; that stretch reads EKERKIAMHTRNREETAEERKERKAAVKEEKREQRKE. Over residues 491 to 506 the composition is skewed to basic residues; that stretch reads KIPKHLKKRAHRQHMK.

Belongs to the protein kinase superfamily. RIO-type Ser/Thr kinase family. The cofactor is Mg(2+). As to expression, expressed in vulva and uterine cells, uterine seam cells (utse), spermatheca and in the nervous system including chemosensory neurons in the head, nerve ring neurons (RID/RIF), inhibitory motor neurons (DA/DD/VA/VD), mechanosensory neurons (ALML/PLML) and tail sensory neurons (DVA//PDA). Also expressed in intestine and pharynx (procorpus) and rectal valve and gland.

It is found in the cytoplasm. The enzyme catalyses L-seryl-[protein] + ATP = O-phospho-L-seryl-[protein] + ADP + H(+). It carries out the reaction L-threonyl-[protein] + ATP = O-phospho-L-threonyl-[protein] + ADP + H(+). In terms of biological role, involved in the final steps of cytoplasmic maturation of the 40S ribosomal subunit. Despite the protein kinase domain is proposed to act predominantly as an ATPase. The catalytic activity regulates its dynamic association with the 40S subunit. Plays a role in oogenesis by regulating germ cell proliferation, progression through diplotene and diakinesis stages and oocyte maturation. Regulates germline development probably by regulating the phosphorylation of mpk-1. Involved in larval development. In Caenorhabditis elegans, this protein is Serine/threonine-protein kinase RIO1.